The sequence spans 237 residues: Uridylate kinase (237 aa).

Position 9–12 (9–12) interacts with ATP; sequence KLSG. Gly51 is a binding site for UMP. The ATP site is built by Gly52 and Arg56. Residues Asp71 and 132 to 139 contribute to the UMP site; that span reads CGNPFFTT. ATP contacts are provided by Thr159, Tyr165, and Asp168.

The protein belongs to the UMP kinase family. Homohexamer.

The protein localises to the cytoplasm. It catalyses the reaction UMP + ATP = UDP + ADP. It functions in the pathway pyrimidine metabolism; CTP biosynthesis via de novo pathway; UDP from UMP (UMPK route): step 1/1. Its activity is regulated as follows. Inhibited by UTP. Functionally, catalyzes the reversible phosphorylation of UMP to UDP. The sequence is that of Uridylate kinase from Prochlorococcus marinus (strain SARG / CCMP1375 / SS120).